Reading from the N-terminus, the 228-residue chain is Ribonuclease HII (228 aa).

The RNase H type-2 domain occupies 1–210; the sequence is MKIAGIDEAG…LKKIAEKVES (210 aa). Residues Asp7, Glu8, and Asp105 each coordinate a divalent metal cation.

Belongs to the RNase HII family. As to quaternary structure, monomer. The cofactor is Mn(2+). Mg(2+) is required as a cofactor.

It is found in the cytoplasm. It catalyses the reaction Endonucleolytic cleavage to 5'-phosphomonoester.. Functionally, endonuclease that specifically degrades the RNA of RNA-DNA hybrids. This chain is Ribonuclease HII (rnhB), found in Thermococcus kodakarensis (strain ATCC BAA-918 / JCM 12380 / KOD1) (Pyrococcus kodakaraensis (strain KOD1)).